Here is a 144-residue protein sequence, read N- to C-terminus: Large ribosomal subunit protein uL11 (144 aa).

This sequence belongs to the universal ribosomal protein uL11 family. In terms of assembly, part of the ribosomal stalk of the 50S ribosomal subunit. Interacts with L10 and the large rRNA to form the base of the stalk. L10 forms an elongated spine to which L12 dimers bind in a sequential fashion forming a multimeric L10(L12)X complex. Post-translationally, one or more lysine residues are methylated.

Its function is as follows. Forms part of the ribosomal stalk which helps the ribosome interact with GTP-bound translation factors. This chain is Large ribosomal subunit protein uL11, found in Granulibacter bethesdensis (strain ATCC BAA-1260 / CGDNIH1).